A 24-amino-acid polypeptide reads, in one-letter code: Ascaphin-6 (24 aa).

As to expression, expressed by the skin glands.

It is found in the secreted. In terms of biological role, antimicrobial peptide that shows higher potency against Gram-negative bacteria than against Gram-positive bacteria. Has a very week hemolytic activity. The protein is Ascaphin-6 of Ascaphus truei (Coastal tailed frog).